Reading from the N-terminus, the 240-residue chain is CD302 antigen (240 aa).

Positions 40-160 constitute a C-type lectin domain; the sequence is FQDSCYIFLQ…CEVSSVEGTL (121 aa). An N-linked (GlcNAc...) asparagine glycan is attached at Asn-117. Residues Cys-136 and Cys-151 are joined by a disulfide bond. The helical transmembrane segment at 177–197 threads the bilayer; the sequence is ILISALVIASTVILTVLGAVI. Topologically, residues 198-240 are cytoplasmic; that stretch reads WFLYKRNLDSGFTTVFSTAPQSPFNDDCVLVVAEENEYAVQFD.

It localises to the membrane. It is found in the cell projection. The protein resides in the filopodium. Its subcellular location is the cytoplasm. The protein localises to the cell cortex. In terms of biological role, potential multifunctional C-type lectin receptor that may play roles in endocytosis and phagocytosis as well as in cell adhesion and migration. In Sus scrofa (Pig), this protein is CD302 antigen.